A 357-amino-acid polypeptide reads, in one-letter code: DNA replication and repair protein RecF (357 aa).

Residue G31–T38 participates in ATP binding.

Belongs to the RecF family.

It is found in the cytoplasm. Functionally, the RecF protein is involved in DNA metabolism; it is required for DNA replication and normal SOS inducibility. RecF binds preferentially to single-stranded, linear DNA. It also seems to bind ATP. The protein is DNA replication and repair protein RecF of Coxiella burnetii (strain RSA 493 / Nine Mile phase I).